We begin with the raw amino-acid sequence, 201 residues long: UPF0301 protein MSMEG_6921/MSMEI_6732 (201 aa).

Belongs to the UPF0301 (AlgH) family.

In Mycolicibacterium smegmatis (strain ATCC 700084 / mc(2)155) (Mycobacterium smegmatis), this protein is UPF0301 protein MSMEG_6921/MSMEI_6732.